The sequence spans 317 residues: Acetylglutamate kinase (317 aa).

Substrate contacts are provided by residues 75–76 (GG), Arg-97, and Asn-196.

The protein belongs to the acetylglutamate kinase family. ArgB subfamily.

It localises to the cytoplasm. The catalysed reaction is N-acetyl-L-glutamate + ATP = N-acetyl-L-glutamyl 5-phosphate + ADP. It participates in amino-acid biosynthesis; L-arginine biosynthesis; N(2)-acetyl-L-ornithine from L-glutamate: step 2/4. In terms of biological role, catalyzes the ATP-dependent phosphorylation of N-acetyl-L-glutamate. This chain is Acetylglutamate kinase, found in Corynebacterium jeikeium (strain K411).